The sequence spans 237 residues: Sulfhydrogenase 2 subunit delta (237 aa).

[4Fe-4S] cluster is bound by residues Cys-11, Cys-14, Cys-83, Cys-132, Cys-160, Cys-163, Cys-170, and Cys-179. [3Fe-4S] cluster contacts are provided by Cys-188, Cys-192, Cys-199, and Cys-202.

This sequence belongs to the [NiFe]/[NiFeSe] hydrogenase small subunit family. As to quaternary structure, dimer of heterotetramer of alpha, beta, gamma and delta subunits. The nickel-containing alpha and delta subunits constitute the hydrogenase activity. The beta and gamma subunits (flavin-containing dimer) constitute the sulfur reductase activity. Ni(2+) is required as a cofactor. [4Fe-4S] cluster serves as cofactor. Requires [3Fe-4S] cluster as cofactor.

It is found in the cytoplasm. It catalyses the reaction H2 + NADP(+) = NADPH + H(+). The catalysed reaction is H2 + NAD(+) = NADH + H(+). Part of a bifunctional enzyme complex that functions as a hydrogen-evolving hydrogenase with sulfur-reducing activity. May play a role in hydrogen cycling during fermentative growth. Activity exhibited with NAD in addition to NADPH. The alpha and delta subunits form the hydrogenase component that catalyzes the reduction of protons to evolve hydrogen. The sequence is that of Sulfhydrogenase 2 subunit delta from Pyrococcus furiosus (strain ATCC 43587 / DSM 3638 / JCM 8422 / Vc1).